Reading from the N-terminus, the 952-residue chain is Bifunctional ent-kaurene synthase (952 aa).

The DXDD B-type cyclization motif motif lies at 328-331 (DVDD). Positions 668, 672, 848, 849, 852, and 856 each coordinate Mg(2+). Positions 668 to 672 (DEYME) match the DEXXE A-type cyclization motif motif.

This sequence belongs to the terpene synthase family. The cofactor is Mg(2+).

The enzyme catalyses ent-copalyl diphosphate = ent-kaur-16-ene + diphosphate. It carries out the reaction (2E,6E,10E)-geranylgeranyl diphosphate = ent-copalyl diphosphate. It participates in plant hormone biosynthesis; gibberellin biosynthesis. Bifunctional ent-kaurene synthase; part of the gene cluster that mediates the biosynthesis of gibberellins (GAs), diterpenoids that may provide a selective advantage during infection of the preferred host plant, rice. Gibberellins (GAs) are diterpenoids and are synthesized via the mevalonate pathway. Biosynthesis of the major metabolite GA3 (gibberellic acid) from geranylgeranyl diphosphate (GGPP) requires 13 steps. The GGPP produced by the geranylgeranyl diphosphate synthase GGS2 is converted to ent-kaurene via ent-copalyldiphosphate in a two-step cyclization reaction performed by the bifunctional ent-copalyl diphosphate synthase/ent-kaurene synthase enzyme (CPS/KS). Ent-Kaurene is metabolized to GAs by a series of oxidation reactions catalyzed by cytochrome P450 monooxygenases. Cytochrome P450 monooxygenase P450-4 is an ent-kaurene oxidase that catalyzes the three oxidation steps between ent-kaurene and ent-kaurenoic acid. The highly multifunctional cytochrome P450 monooxygenase P450-1 then catalyzes four steps involving oxidation at two carbon atoms, in the main pathway from ent-kaurenoic acid to GA14 via GA12-aldehyde as well as producing kaurenolides and fujenoic acids as by-products. The cytochrome P450 monooxygenase P450-2 then converts GA14 to GA4 by removal of C-20. GA4 is further converted to GA7 by the GA4 desaturase DES via 1,2-desaturation before cytochrome P450 monooxygenase P450-3, a 13-hydroxylase, hydroxylates GA7 to GA3, the final product of the GA-biosynthetic pathway. This chain is Bifunctional ent-kaurene synthase, found in Gibberella fujikuroi (strain CBS 195.34 / IMI 58289 / NRRL A-6831) (Bakanae and foot rot disease fungus).